A 303-amino-acid polypeptide reads, in one-letter code: Aspartate carbamoyltransferase catalytic subunit (303 aa).

Carbamoyl phosphate is bound by residues Arg48 and Thr49. Lys76 provides a ligand contact to L-aspartate. Carbamoyl phosphate-binding residues include Arg98, His129, and Gln132. The L-aspartate site is built by Arg162 and Arg214. Carbamoyl phosphate contacts are provided by Ala257 and Pro258.

Belongs to the aspartate/ornithine carbamoyltransferase superfamily. ATCase family. In terms of assembly, heterododecamer (2C3:3R2) of six catalytic PyrB chains organized as two trimers (C3), and six regulatory PyrI chains organized as three dimers (R2).

The enzyme catalyses carbamoyl phosphate + L-aspartate = N-carbamoyl-L-aspartate + phosphate + H(+). It functions in the pathway pyrimidine metabolism; UMP biosynthesis via de novo pathway; (S)-dihydroorotate from bicarbonate: step 2/3. Catalyzes the condensation of carbamoyl phosphate and aspartate to form carbamoyl aspartate and inorganic phosphate, the committed step in the de novo pyrimidine nucleotide biosynthesis pathway. In Leuconostoc citreum (strain KM20), this protein is Aspartate carbamoyltransferase catalytic subunit.